A 290-amino-acid polypeptide reads, in one-letter code: Probable branched-chain-amino-acid aminotransferase (290 aa).

Residue K155 is modified to N6-(pyridoxal phosphate)lysine.

Belongs to the class-IV pyridoxal-phosphate-dependent aminotransferase family. Requires pyridoxal 5'-phosphate as cofactor.

It carries out the reaction L-leucine + 2-oxoglutarate = 4-methyl-2-oxopentanoate + L-glutamate. The enzyme catalyses L-isoleucine + 2-oxoglutarate = (S)-3-methyl-2-oxopentanoate + L-glutamate. The catalysed reaction is L-valine + 2-oxoglutarate = 3-methyl-2-oxobutanoate + L-glutamate. It functions in the pathway amino-acid biosynthesis; L-isoleucine biosynthesis; L-isoleucine from 2-oxobutanoate: step 4/4. Its pathway is amino-acid biosynthesis; L-leucine biosynthesis; L-leucine from 3-methyl-2-oxobutanoate: step 4/4. The protein operates within amino-acid biosynthesis; L-valine biosynthesis; L-valine from pyruvate: step 4/4. Acts on leucine, isoleucine and valine. The protein is Probable branched-chain-amino-acid aminotransferase (ilvE) of Rickettsia conorii (strain ATCC VR-613 / Malish 7).